Consider the following 334-residue polypeptide: Thioredoxin reductase (334 aa).

FAD contacts are provided by residues 10–13 (SGPA), 39–40 (IA), Q44, N53, V86, C143, D287, and 294–296 (RQA). Residues C140 and C143 are joined by a disulfide bond.

Belongs to the class-II pyridine nucleotide-disulfide oxidoreductase family. Homodimer. It depends on FAD as a cofactor.

It localises to the cytoplasm. The catalysed reaction is [thioredoxin]-dithiol + NADP(+) = [thioredoxin]-disulfide + NADPH + H(+). The protein is Thioredoxin reductase (cys-9) of Neurospora crassa (strain ATCC 24698 / 74-OR23-1A / CBS 708.71 / DSM 1257 / FGSC 987).